The primary structure comprises 200 residues: Pyridoxal 5'-phosphate synthase subunit PdxT (200 aa).

52–54 (GES) serves as a coordination point for L-glutamine. Cysteine 84 acts as the Nucleophile in catalysis. L-glutamine-binding positions include arginine 116 and 145–146 (IR). Catalysis depends on charge relay system residues histidine 181 and glutamate 183.

The protein belongs to the glutaminase PdxT/SNO family. In terms of assembly, in the presence of PdxS, forms a dodecamer of heterodimers. Only shows activity in the heterodimer.

It catalyses the reaction aldehydo-D-ribose 5-phosphate + D-glyceraldehyde 3-phosphate + L-glutamine = pyridoxal 5'-phosphate + L-glutamate + phosphate + 3 H2O + H(+). The enzyme catalyses L-glutamine + H2O = L-glutamate + NH4(+). It participates in cofactor biosynthesis; pyridoxal 5'-phosphate biosynthesis. Its function is as follows. Catalyzes the hydrolysis of glutamine to glutamate and ammonia as part of the biosynthesis of pyridoxal 5'-phosphate. The resulting ammonia molecule is channeled to the active site of PdxS. The protein is Pyridoxal 5'-phosphate synthase subunit PdxT of Sulfurisphaera tokodaii (strain DSM 16993 / JCM 10545 / NBRC 100140 / 7) (Sulfolobus tokodaii).